The sequence spans 591 residues: Probable lysosomal cobalamin transporter (591 aa).

The next 5 membrane-spanning stretches (helical) occupy residues 8–28 (LIWVAYAVAVAILFLIASTFV), 39–59 (AAVTIVCIFTTLALLATVLLI), 95–115 (IVYYTLYSLDAVLCLLVIPFT), 144–164 (WTLGFLIFVVAIFLVGFFVPF), and 198–218 (FLITVGTVLFVLYTGAGMALL). The tract at residues 238 to 266 (TASQLETNRERQRQLEGRNEGREGGLDSR) is disordered. The span at 244-266 (TNRERQRQLEGRNEGREGGLDSR) shows a compositional bias: basic and acidic residues. The next 4 helical transmembrane spans lie at 315–335 (LIGGLILLVFALVIFASMLIT), 378–398 (VLFLLLVLFLFSASVVGIATA), 422–442 (MATVLLTLITLAINYSVAMVV), and 509–529 (FFGIVLFWAQFAFLGVYLIVF).

Belongs to the LIMR family. LMBRD1 subfamily.

Its subcellular location is the lysosome membrane. Functionally, probable lysosomal cobalamin transporter. Required to export cobalamin from lysosomes allowing its conversion to cofactors. This Pyrenophora tritici-repentis (strain Pt-1C-BFP) (Wheat tan spot fungus) protein is Probable lysosomal cobalamin transporter.